The chain runs to 69 residues: Disintegrin EC6 subunit beta (69 aa).

Positions 1–65 (NSVHPCCDPV…DCPPNPWNGK (65 aa)) constitute a Disintegrin domain. Cystine bridges form between cysteine 6/cysteine 29, cysteine 20/cysteine 26, cysteine 25/cysteine 50, and cysteine 38/cysteine 57. A Cell attachment site motif is present at residues 42–44 (RGD).

Belongs to the venom metalloproteinase (M12B) family. P-II subfamily. P-IIe sub-subfamily. As to quaternary structure, heterodimer with subunit alpha; disulfide-linked. Expressed by the venom gland.

The protein localises to the secreted. Functionally, potently inhibits adhesion of alpha-4/beta-1 (ITGA4/ITGB1) and alpha-9/beta-1 (ITGA9/ITGB1) integrins to VCAM1, and adhesion of alpha-5/beta-1 (ITGA5/ITGB1) integrin to fibronectin. Has a much less effect on alpha-IIb/beta-3 (ITGA2B/ITGB3) integrin. Also potently inhibits neutrophil migration across TNF-alpha-activated human umbilical endothelial cells. This Echis carinatus sochureki (Saw-scaled viper) protein is Disintegrin EC6 subunit beta.